A 327-amino-acid polypeptide reads, in one-letter code: Polyadenylate-binding protein-interacting protein 9 (327 aa).

Positions 59–69 match the PAM2-like motif; the sequence is KLNPLAKEFFP. The segment covering 97 to 113 has biased composition (basic and acidic residues); sequence KQSGEEFDLDAKKDDNT. Residues 97–132 form a disordered region; that stretch reads KQSGEEFDLDAKKDDNTRKRRNYSQGRRRLTGRISK. The short motif at 114-125 is the Bipartite nuclear localization signal element; the sequence is RKRRNYSQGRRR. A compositionally biased stretch (basic residues) spans 114 to 127; it reads RKRRNYSQGRRRLT. 2 RRM domains span residues 141–216 and 238–314; these read RTVY…PSKT and RTIY…PSKT. The interval 308-327 is disordered; the sequence is RVSPSKTPVRPRITRPPSTN.

Its subcellular location is the nucleus. The chain is Polyadenylate-binding protein-interacting protein 9 (CID9) from Arabidopsis thaliana (Mouse-ear cress).